The primary structure comprises 363 residues: Endopolygalacturonase A (363 aa).

An N-terminal signal peptide occupies residues 1 to 20 (MQLLQSSVIAATVGAALVAA). A propeptide spanning residues 21 to 28 (VPVELEAR) is cleaved from the precursor. Cysteine 31 and cysteine 46 are joined by a disulfide. 6 PbH1 repeats span residues 158–187 (SDNLNITDVTIDNSAGTAEGHNTDAFDVGS), 188–209 (STYINIDGATVYNQDDCLAINS), 210–230 (GSHITFTNGYCDGGHGLSIGS), 239–260 (VEDVTISNSKVVNSQNGVRIKT), 268–290 (VSNVKFEDITLSGITKYGLIVEQ), and 302–347 (TNGI…SITG). Asparagine 162 is a glycosylation site (N-linked (GlcNAc...) asparagine). The Proton donor role is filled by aspartate 202. A disulfide bridge links cysteine 204 with cysteine 220. Histidine 224 is an active-site residue. Disulfide bonds link cysteine 330–cysteine 335 and cysteine 354–cysteine 363.

It belongs to the glycosyl hydrolase 28 family.

It is found in the secreted. The enzyme catalyses (1,4-alpha-D-galacturonosyl)n+m + H2O = (1,4-alpha-D-galacturonosyl)n + (1,4-alpha-D-galacturonosyl)m.. Its function is as follows. Involved in maceration and soft-rotting of plant tissue. Hydrolyzes the 1,4-alpha glycosidic bonds of de-esterified pectate in the smooth region of the plant cell wall. This chain is Endopolygalacturonase A (pgaA), found in Aspergillus flavus (strain ATCC MYA-384 / AF70).